A 197-amino-acid chain; its full sequence is MEVNHVELVMSAVDPAQYPTTGYPEIALVGRSNVGKSSLTNVLINRNSYARTSSQPGKTQTLNFYNVEDQLYFVDVPGYGYAKVSKTEREKWGQMIETYLTQRDQLRGVISLVDARHAPTEDDIQMYRWLAYYELPTLIVATKSDKIARGKWNQAVSQIKKSLELPNTDNIVMFSAPKKMGKDAVWNWIEAQAFGGE.

Residues 22-195 (GYPEIALVGR…WNWIEAQAFG (174 aa)) form the EngB-type G domain. GTP is bound by residues 30–37 (GRSNVGKS), 57–61 (GKTQT), 75–78 (DVPG), 142–145 (TKSD), and 174–176 (FSA). Mg(2+) contacts are provided by serine 37 and threonine 59.

This sequence belongs to the TRAFAC class TrmE-Era-EngA-EngB-Septin-like GTPase superfamily. EngB GTPase family. Requires Mg(2+) as cofactor.

In terms of biological role, necessary for normal cell division and for the maintenance of normal septation. This Levilactobacillus brevis (strain ATCC 367 / BCRC 12310 / CIP 105137 / JCM 1170 / LMG 11437 / NCIMB 947 / NCTC 947) (Lactobacillus brevis) protein is Probable GTP-binding protein EngB.